The primary structure comprises 403 residues: Ribosomal RNA large subunit methyltransferase I (403 aa).

The region spanning 9 to 88 (YPRLVLSKGR…ESIDIAFFTR (80 aa)) is the PUA domain.

This sequence belongs to the methyltransferase superfamily. RlmI family.

Its subcellular location is the cytoplasm. It carries out the reaction cytidine(1962) in 23S rRNA + S-adenosyl-L-methionine = 5-methylcytidine(1962) in 23S rRNA + S-adenosyl-L-homocysteine + H(+). Its function is as follows. Specifically methylates the cytosine at position 1962 (m5C1962) of 23S rRNA. This Salmonella choleraesuis (strain SC-B67) protein is Ribosomal RNA large subunit methyltransferase I.